Reading from the N-terminus, the 538-residue chain is CTP synthase (538 aa).

Residues Met-1–Leu-267 form an amidoligase domain region. Residue Ser-15 coordinates CTP. Ser-15 lines the UTP pocket. ATP is bound by residues Ser-16–Ile-21 and Asp-73. Mg(2+) contacts are provided by Asp-73 and Glu-141. Residues Asp-148–Glu-150, Lys-188–Gln-193, and Lys-224 contribute to the CTP site. Residues Lys-188–Gln-193 and Lys-224 contribute to the UTP site. One can recognise a Glutamine amidotransferase type-1 domain in the interval Lys-292–Ser-538. An L-glutamine-binding site is contributed by Gly-351. Residue Cys-378 is the Nucleophile; for glutamine hydrolysis of the active site. L-glutamine-binding positions include Leu-379–Gln-382, Glu-402, and Arg-469. Residues His-513 and Glu-515 contribute to the active site.

This sequence belongs to the CTP synthase family. As to quaternary structure, homotetramer.

It catalyses the reaction UTP + L-glutamine + ATP + H2O = CTP + L-glutamate + ADP + phosphate + 2 H(+). The enzyme catalyses L-glutamine + H2O = L-glutamate + NH4(+). The catalysed reaction is UTP + NH4(+) + ATP = CTP + ADP + phosphate + 2 H(+). Its pathway is pyrimidine metabolism; CTP biosynthesis via de novo pathway; CTP from UDP: step 2/2. With respect to regulation, allosterically activated by GTP, when glutamine is the substrate; GTP has no effect on the reaction when ammonia is the substrate. The allosteric effector GTP functions by stabilizing the protein conformation that binds the tetrahedral intermediate(s) formed during glutamine hydrolysis. Inhibited by the product CTP, via allosteric rather than competitive inhibition. Catalyzes the ATP-dependent amination of UTP to CTP with either L-glutamine or ammonia as the source of nitrogen. Regulates intracellular CTP levels through interactions with the four ribonucleotide triphosphates. The sequence is that of CTP synthase from Helicobacter pylori (strain ATCC 700392 / 26695) (Campylobacter pylori).